Consider the following 258-residue polypeptide: Granzyme K (258 aa).

An N-terminal signal peptide occupies residues 1–23 (MSFSSSALVFLVAGIYMSSESFH). The propeptide at 24 to 25 (TE) is activation peptide. In terms of domain architecture, Peptidase S1 spans 26–253 (IIGGREVQPH…YQTWIKSKLA (228 aa)). Cys-51 and Cys-67 are oxidised to a cystine. Catalysis depends on charge relay system residues His-66 and Asp-110. Cystine bridges form between Cys-143–Cys-214, Cys-175–Cys-193, and Cys-204–Cys-228. Ser-208 functions as the Charge relay system in the catalytic mechanism.

Belongs to the peptidase S1 family. Granzyme subfamily. In terms of tissue distribution, speen, lungs and liver non-parenchymal cells.

It is found in the cytoplasmic granule. The polypeptide is Granzyme K (Gzmk) (Rattus norvegicus (Rat)).